Here is a 97-residue protein sequence, read N- to C-terminus: Putative septation protein SpoVG (97 aa).

Belongs to the SpoVG family.

Its function is as follows. Could be involved in septation. The protein is Putative septation protein SpoVG of Anaeromyxobacter sp. (strain Fw109-5).